A 130-amino-acid chain; its full sequence is Fumarate reductase subunit C (130 aa).

3 helical membrane-spanning segments follow: residues 30 to 50 (EGTS…VFSL), 60 to 80 (FVSF…LFAA), and 110 to 130 (IKAL…VALL).

It belongs to the FrdC family. In terms of assembly, part of an enzyme complex containing four subunits: a flavoprotein (FrdA), an iron-sulfur protein (FrdB), and two hydrophobic anchor proteins (FrdC and FrdD).

Its subcellular location is the cell inner membrane. Two distinct, membrane-bound, FAD-containing enzymes are responsible for the catalysis of fumarate and succinate interconversion; fumarate reductase is used in anaerobic growth, and succinate dehydrogenase is used in aerobic growth. Anchors the catalytic components of the fumarate reductase complex to the cell inner membrane, binds quinones. In Yersinia pestis bv. Antiqua (strain Angola), this protein is Fumarate reductase subunit C.